Reading from the N-terminus, the 314-residue chain is ATP synthase gamma chain (314 aa).

The protein belongs to the ATPase gamma chain family. In terms of assembly, F-type ATPases have 2 components, CF(1) - the catalytic core - and CF(0) - the membrane proton channel. CF(1) has five subunits: alpha(3), beta(3), gamma(1), delta(1), epsilon(1). CF(0) has three main subunits: a, b and c.

It is found in the cellular thylakoid membrane. Its function is as follows. Produces ATP from ADP in the presence of a proton gradient across the membrane. The gamma chain is believed to be important in regulating ATPase activity and the flow of protons through the CF(0) complex. This is ATP synthase gamma chain from Crocosphaera subtropica (strain ATCC 51142 / BH68) (Cyanothece sp. (strain ATCC 51142)).